The sequence spans 390 residues: 8-amino-7-oxononanoate synthase (390 aa).

Arg-22 lines the substrate pocket. A pyridoxal 5'-phosphate-binding site is contributed by 109 to 110; it reads GY. Substrate is bound at residue His-134. Residues Ser-180, His-208, and Thr-236 each coordinate pyridoxal 5'-phosphate. Position 239 is an N6-(pyridoxal phosphate)lysine (Lys-239). Thr-353 contributes to the substrate binding site.

This sequence belongs to the class-II pyridoxal-phosphate-dependent aminotransferase family. BioF subfamily. Homodimer. Pyridoxal 5'-phosphate serves as cofactor.

The catalysed reaction is 6-carboxyhexanoyl-[ACP] + L-alanine + H(+) = (8S)-8-amino-7-oxononanoate + holo-[ACP] + CO2. The protein operates within cofactor biosynthesis; biotin biosynthesis. Functionally, catalyzes the decarboxylative condensation of pimeloyl-[acyl-carrier protein] and L-alanine to produce 8-amino-7-oxononanoate (AON), [acyl-carrier protein], and carbon dioxide. The polypeptide is 8-amino-7-oxononanoate synthase (Azoarcus sp. (strain BH72)).